A 185-amino-acid polypeptide reads, in one-letter code: Crossover junction endodeoxyribonuclease RuvC (185 aa).

Residues Asp-7, Glu-66, and Asp-137 contribute to the active site. Positions 7, 66, and 137 each coordinate Mg(2+).

It belongs to the RuvC family. Homodimer which binds Holliday junction (HJ) DNA. The HJ becomes 2-fold symmetrical on binding to RuvC with unstacked arms; it has a different conformation from HJ DNA in complex with RuvA. In the full resolvosome a probable DNA-RuvA(4)-RuvB(12)-RuvC(2) complex forms which resolves the HJ. Mg(2+) serves as cofactor.

The protein resides in the cytoplasm. The enzyme catalyses Endonucleolytic cleavage at a junction such as a reciprocal single-stranded crossover between two homologous DNA duplexes (Holliday junction).. The RuvA-RuvB-RuvC complex processes Holliday junction (HJ) DNA during genetic recombination and DNA repair. Endonuclease that resolves HJ intermediates. Cleaves cruciform DNA by making single-stranded nicks across the HJ at symmetrical positions within the homologous arms, yielding a 5'-phosphate and a 3'-hydroxyl group; requires a central core of homology in the junction. The consensus cleavage sequence is 5'-(A/T)TT(C/G)-3'. Cleavage occurs on the 3'-side of the TT dinucleotide at the point of strand exchange. HJ branch migration catalyzed by RuvA-RuvB allows RuvC to scan DNA until it finds its consensus sequence, where it cleaves and resolves the cruciform DNA. The protein is Crossover junction endodeoxyribonuclease RuvC of Anaeromyxobacter sp. (strain K).